Reading from the N-terminus, the 312-residue chain is Acetyl-coenzyme A carboxylase carboxyl transferase subunit beta (312 aa).

The disordered stretch occupies residues 1–52; the sequence is MEMDTAVENPAVEKNGQPTPSSTSTATDAAPTPNAPNRPAPNTAGNRKRGVP. Residues 18-32 are compositionally biased toward low complexity; the sequence is PTPSSTSTATDAAPT. The 258-residue stretch at 55-312 folds into the CoA carboxyltransferase N-terminal domain; that stretch reads VWRKCDSCGA…IATAIDYCGK (258 aa). Cys-59, Cys-62, Cys-78, and Cys-81 together coordinate Zn(2+). The segment at 59 to 81 adopts a C4-type zinc-finger fold; sequence CDSCGASLFYKEVQQRLNVCPQC.

This sequence belongs to the AccD/PCCB family. As to quaternary structure, acetyl-CoA carboxylase is a heterohexamer composed of biotin carboxyl carrier protein (AccB), biotin carboxylase (AccC) and two subunits each of ACCase subunit alpha (AccA) and ACCase subunit beta (AccD). The cofactor is Zn(2+).

The protein localises to the cytoplasm. It carries out the reaction N(6)-carboxybiotinyl-L-lysyl-[protein] + acetyl-CoA = N(6)-biotinyl-L-lysyl-[protein] + malonyl-CoA. The protein operates within lipid metabolism; malonyl-CoA biosynthesis; malonyl-CoA from acetyl-CoA: step 1/1. Its function is as follows. Component of the acetyl coenzyme A carboxylase (ACC) complex. Biotin carboxylase (BC) catalyzes the carboxylation of biotin on its carrier protein (BCCP) and then the CO(2) group is transferred by the transcarboxylase to acetyl-CoA to form malonyl-CoA. This Rhodopirellula baltica (strain DSM 10527 / NCIMB 13988 / SH1) protein is Acetyl-coenzyme A carboxylase carboxyl transferase subunit beta.